The primary structure comprises 156 residues: Small ribosomal subunit protein uS7 (156 aa).

Belongs to the universal ribosomal protein uS7 family. In terms of assembly, part of the 30S ribosomal subunit. Contacts proteins S9 and S11.

One of the primary rRNA binding proteins, it binds directly to 16S rRNA where it nucleates assembly of the head domain of the 30S subunit. Is located at the subunit interface close to the decoding center, probably blocks exit of the E-site tRNA. The sequence is that of Small ribosomal subunit protein uS7 from Streptococcus sanguinis (strain SK36).